We begin with the raw amino-acid sequence, 241 residues long: Small ribosomal subunit protein eS4 (241 aa).

Positions 37–100 constitute an S4 RNA-binding domain; it reads LPIVVWARDQ…GKHYRILRDK (64 aa).

Belongs to the eukaryotic ribosomal protein eS4 family.

In Methanospirillum hungatei JF-1 (strain ATCC 27890 / DSM 864 / NBRC 100397 / JF-1), this protein is Small ribosomal subunit protein eS4.